The primary structure comprises 761 residues: Mitochondrial inner membrane m-AAA protease component YTA10 (761 aa).

Residues 1–115 (MMMWQRYARG…SLSEYFRSKE (115 aa)) lie on the Mitochondrial matrix side of the membrane. The tract at residues 67 to 101 (SWTRLNENRPNKEGEGKNNGNKDNNSNKEDGKDKR) is disordered. Basic and acidic residues-rich tracts occupy residues 72-82 (NENRPNKEGEG) and 91-101 (NSNKEDGKDKR). A helical transmembrane segment spans residues 116-136 (FANTMFLTIGFTIIFTLLTPS). Topologically, residues 137–223 (SNNSGDDSNR…IPIKYIERSS (87 aa)) are mitochondrial intermembrane. The helical transmembrane segment at 224 to 244 (PFTFLFPFLPTIILLGGLYFI) threads the bilayer. Over 245 to 761 (TRKINSSPPN…EPPEAPAATN (517 aa)) the chain is Mitochondrial matrix. The ATP site is built by V290, A291, T332, G333, K334, T335, L336, and H472. H558 is a binding site for Zn(2+). E559 is a catalytic residue. Residues H562 and D634 each coordinate Zn(2+).

This sequence in the N-terminal section; belongs to the AAA ATPase family. The protein in the C-terminal section; belongs to the peptidase M41 family. As to quaternary structure, component of the 850 kDa m-AAA protease complex, a heterohexamer composed of YTA12/RCA1 and YTA10/AFG3. Associates with the prohibitin complex, composed of PHB1 and PHB2, inhibiting the activity of the m-AAA protease complex. Requires Zn(2+) as cofactor.

The protein localises to the mitochondrion inner membrane. It carries out the reaction ATP + H2O = ADP + phosphate + H(+). With respect to regulation, ATP hydrolysis is coordinated within m-AAA protease ring complexes: ATP-binding to YTA10/AFG3 inhibits ATP hydrolysis by the neighboring subunit YTA12/RCA1, leading to coordinated ATP hydrolysis within the AAA ATPase ring. Its function is as follows. Catalytic component of the m-AAA protease, a protease that plays a key role in proteostasis of inner mitochondrial membrane proteins. YTA10/AFG3 possesses both ATPase and protease activities: the ATPase activity is required to unfold substrates, threading them into the internal proteolytic cavity for hydrolysis into small peptide fragments. The complex is necessary for the assembly of mitochondrial respiratory chain and ATPase complexes. The m-AAA protease carries out protein quality control in the inner membrane of the mitochondria by mediating degradation of mistranslated or misfolded polypeptides. It also mediates protein maturation of the mitochondrial ribosomal subunit MRPL32/bL32m by catalyzing the cleavage of the presequence of MRPL32/bL32m prior to assembly into the mitochondrial ribosome. Promotes maturation of cytochrome c peroxidase (CCP1) by acting as a membrane protein dislocase via its ATPase activity: pulls the CCP1 transmembrane to the matrix prior to processing by the rhomboid protease PCP1. The membrane protein dislocase activity is also required to dislocate moderately hydrophobic transmembrane segments from the membrane. The chain is Mitochondrial inner membrane m-AAA protease component YTA10 from Saccharomyces cerevisiae (strain ATCC 204508 / S288c) (Baker's yeast).